A 225-amino-acid chain; its full sequence is UPF0758 protein XOO0495 (225 aa).

The MPN domain occupies 102 to 224; that stretch reads ALSDPPSVGR…PVSLAERGWL (123 aa). 3 residues coordinate Zn(2+): H173, H175, and D186. The JAMM motif signature appears at 173–186; that stretch reads HNHPSGNPEPSKAD.

Belongs to the UPF0758 family.

In Xanthomonas oryzae pv. oryzae (strain KACC10331 / KXO85), this protein is UPF0758 protein XOO0495.